Consider the following 341-residue polypeptide: L-threonine 3-dehydrogenase (341 aa).

A Zn(2+)-binding site is contributed by C38. Catalysis depends on charge relay system residues T40 and H43. Residues H63, E64, C93, C96, C99, and C107 each contribute to the Zn(2+) site. Residues I175, D195, R200, 262–264 (LGI), and 286–287 (IY) contribute to the NAD(+) site.

The protein belongs to the zinc-containing alcohol dehydrogenase family. In terms of assembly, homotetramer. Requires Zn(2+) as cofactor.

The protein resides in the cytoplasm. The enzyme catalyses L-threonine + NAD(+) = (2S)-2-amino-3-oxobutanoate + NADH + H(+). The protein operates within amino-acid degradation; L-threonine degradation via oxydo-reductase pathway; glycine from L-threonine: step 1/2. Functionally, catalyzes the NAD(+)-dependent oxidation of L-threonine to 2-amino-3-ketobutyrate. This Proteus mirabilis (strain HI4320) protein is L-threonine 3-dehydrogenase.